A 391-amino-acid polypeptide reads, in one-letter code: MAIINMTDLDLQNKRVLIREDLNVPVSDGVVTSDARLRASLPTIQLALKKGAAVMVMSHLGRPTEGEFNAEYSMQPVVDYLAKALDCPVRLVSDYLDGVDVNVGEVVVFENVRFNVGEGKNDEALSKKMAALCDVYVMDAFGTAHRAQASTHGVGVYAPIACAGPLLSQELDALGKALDNPARPMVAIVGGSKVSTKLTVLESLSTKVDQLVVGGGIANTFIAAAGYKVGKSLYEADLVEEAKRLVANARSRGGDIPVPTDVVVASEFSPTAAATLKSVADVTDSDMIFDIGPDSAEALAKIIEQAGTIVWNGPVGVFEFDQFGEGTKRIAQAIANSKAFSIAGGGDTLAAVDKYNIADKVSYISTGGGAFLEFLEGKELPAVAMLEKRGA.

Residues 21 to 23, arginine 36, 59 to 62, arginine 113, and arginine 146 each bind substrate; these read DLN and HLGR. ATP is bound by residues lysine 197, glutamate 319, and 345-348; that span reads GGDT.

This sequence belongs to the phosphoglycerate kinase family. As to quaternary structure, monomer.

It localises to the cytoplasm. The enzyme catalyses (2R)-3-phosphoglycerate + ATP = (2R)-3-phospho-glyceroyl phosphate + ADP. It participates in carbohydrate degradation; glycolysis; pyruvate from D-glyceraldehyde 3-phosphate: step 2/5. In Shewanella frigidimarina (strain NCIMB 400), this protein is Phosphoglycerate kinase.